The chain runs to 349 residues: Heat-inducible transcription repressor HrcA (349 aa).

This sequence belongs to the HrcA family.

In terms of biological role, negative regulator of class I heat shock genes (grpE-dnaK-dnaJ and groELS operons). Prevents heat-shock induction of these operons. In Lactobacillus acidophilus (strain ATCC 700396 / NCK56 / N2 / NCFM), this protein is Heat-inducible transcription repressor HrcA.